The sequence spans 608 residues: MLPKLKISAFLLKRLERVKQQSSGCLYGVFYGDGTLLLLSFNLSNVGQLNYEQIQHRFPAELDLCGLVKFGDCTDAEAHLNEVIKSVDITDNPILLKCELGTLVGMRASFFVHGKLEEVPYDVMDSEQLYNDFCFTRLQCGFYLQTAATPECVAKEMHVLRKRVADGNLVFKVPHTNIYIHSCGPMDNKLRGESRINDLVQAIPIPSGKENVVADKKKSKTAAQTQLAKHFGATGCEYDLINIDVMRIRTRDLLARDSPPHPALSIAVTTEEQTRAQVPLEIEAMAMLCKNTKLQRLYDVLIESICRALRLFEQSLNEHLAESEGGSLAVPRSHHFYPQGFGHFLSCAYLEGLGDDEPIMQERRKRLHRQFSLPVTRPYFRRANQCHFQGEVDDAPWTPLLNTHVGVRPSAVTDGKEYLVNGNYHYYHYLQQQVQDKGWGCAYRSLQTICSWFVLQGYTNAPIPTHLEVQKYLHKINDKPSSFVGSSQWIGSTEISMCLQGFLKVDSKILHVSSGAELPTIASELAMHFQTQGTPVMIGGGVLAHTIIGVDYCVQSGEVKFLILDPHYTGADELATIQIKGWCGWKSMDFWSKGSYYNLCMPQRPILY.

Residues Cys-441, Asp-565, and His-567 contribute to the active site.

It belongs to the peptidase C78 family.

Thiol protease which recognizes and hydrolyzes the peptide bond at the C-terminal Gly of UFM1, a ubiquitin-like modifier protein bound to a number of target proteins. Does not hydrolyze SUMO1 or ISG15 ubiquitin-like proteins. This Drosophila pseudoobscura pseudoobscura (Fruit fly) protein is Probable Ufm1-specific protease 2.